A 206-amino-acid chain; its full sequence is Protein GET1 (206 aa).

At 1 to 4 (MPSL) the chain is on the lumenal side. The helical transmembrane segment at 5 to 24 (LITVLFLNVIIYVINTVGAA) threads the bilayer. The Cytoplasmic segment spans residues 25–110 (TVDGLLWLLY…TFDMTIKIAR (86 aa)). A coiled-coil region spans residues 75 to 100 (AKLRRRHDKAMEAYEAKNNELTQSKS). Residues 111-131 (WAATSGLMLFLQFWYSKTPIF) form a helical membrane-spanning segment. Topologically, residues 132 to 155 (TLPPGWIPWQVQWVLSFPRAPMGT) are lumenal. The helical transmembrane segment at 156–172 (VSIQIWGGACATVVALV) threads the bilayer. Residues 173–206 (GDAMRASLAYVSKPKIDRIKLGATMEGKEGKKRQ) are Cytoplasmic-facing.

This sequence belongs to the WRB/GET1 family. As to quaternary structure, interacts with GET3.

It is found in the endoplasmic reticulum membrane. Required for the post-translational delivery of tail-anchored (TA) proteins to the endoplasmic reticulum. Acts as a membrane receptor for soluble GET3, which recognizes and selectively binds the transmembrane domain of TA proteins in the cytosol. The sequence is that of Protein GET1 from Ajellomyces capsulatus (strain NAm1 / WU24) (Darling's disease fungus).